The sequence spans 346 residues: 26S proteasome non-ATPase regulatory subunit 4 (346 aa).

Residues 5–190 (STMICVDNSE…LTDALLQSSV (186 aa)) form the VWFA domain. 2 UIM domains span residues 216–235 (ENDPDLALALRVSMEEERAR) and 273–292 (TEEQQLEWALRLSMQENAPA). The tract at residues 290-346 (APAEQPQVQHEQMDVDGAPAVGGDNLDDLMNNPELLQQIVDDLPAANAEKDDDKEKK) is disordered. A compositionally biased stretch (basic and acidic residues) spans 337 to 346 (AEKDDDKEKK).

The protein belongs to the proteasome subunit S5A family. The 26S proteasome is composed of a core protease, known as the 20S proteasome, capped at one or both ends by the 19S regulatory complex (RC). The RC is composed of at least 18 different subunits in two subcomplexes, the base and the lid, which form the portions proximal and distal to the 20S proteolytic core, respectively. Broadly expressed with high expression in the pharynx, intestine, hypodermis and spermatheca and weak expression in the excretory cell, body wall muscle, vulva and somatic gonad.

It is found in the cytoplasm. The protein localises to the nucleus. Its function is as follows. Binds and presumably selects ubiquitin-conjugates for destruction. Required for protein degradation and ubiquitin-proteasome system (UBS) function and regulates proteasomal subunit expression. Involvement in UBS might be cell type specific. Regulator of the autophagy-lysosome pathway that may confer resistance to autophagy by regulating the expression of autophagy-related proteins such as lgg-1, and by regulating lysosome formation, possibly by modulating elt-2 activity. Required for fertility, sperm production, and sex determination through regulation of tra-2 protein. Plays a role in the elimination of paternal mitochondria in fertilized eggs. This is 26S proteasome non-ATPase regulatory subunit 4 from Caenorhabditis elegans.